Reading from the N-terminus, the 75-residue chain is DNA-directed RNA polymerase subunit omega (75 aa).

It belongs to the RNA polymerase subunit omega family. As to quaternary structure, in cyanobacteria the RNAP catalytic core is composed of 2 alpha, 1 beta, 1 beta', 1 gamma and 1 omega subunit. When a sigma factor is associated with the core the holoenzyme is formed, which can initiate transcription.

The enzyme catalyses RNA(n) + a ribonucleoside 5'-triphosphate = RNA(n+1) + diphosphate. Its function is as follows. Promotes RNA polymerase assembly. Latches the N- and C-terminal regions of the beta' subunit thereby facilitating its interaction with the beta and alpha subunits. The protein is DNA-directed RNA polymerase subunit omega of Parasynechococcus marenigrum (strain WH8102).